The primary structure comprises 428 residues: Adenylosuccinate synthetase (428 aa).

Residues 13-19 and 41-43 each bind GTP; these read GDEGKGK and GHT. Asp14 (proton acceptor) is an active-site residue. Mg(2+) contacts are provided by Asp14 and Gly41. IMP is bound by residues 14–17, 39–42, Thr130, Arg144, Gln223, Thr238, and Arg302; these read DEGK and NAGH. His42 serves as the catalytic Proton donor. 298-304 lines the substrate pocket; sequence ASTGRRR. Residues Arg304, 330–332, and 412–414 contribute to the GTP site; these read KLD and STG.

This sequence belongs to the adenylosuccinate synthetase family. As to quaternary structure, homodimer. The cofactor is Mg(2+).

The protein localises to the cytoplasm. It catalyses the reaction IMP + L-aspartate + GTP = N(6)-(1,2-dicarboxyethyl)-AMP + GDP + phosphate + 2 H(+). It participates in purine metabolism; AMP biosynthesis via de novo pathway; AMP from IMP: step 1/2. Plays an important role in the de novo pathway of purine nucleotide biosynthesis. Catalyzes the first committed step in the biosynthesis of AMP from IMP. This is Adenylosuccinate synthetase from Dichelobacter nodosus (strain VCS1703A).